We begin with the raw amino-acid sequence, 363 residues long: MSPSIVFTGGGTAGHVTPNIALIKEFRKEGWNVEYIGSVSGIEKEMIEPLDIPFHGVSSGKLRRYFSLKNLLDPFKIVLGIIQSSLLFYKIKPDVVFSKGGFVAFPVVVGAWLNRIPVVAHESDMSPGLANRLSFPFVNKICLTFDAGKKYFKRQDKIEVTGTPIRQQLLTGNRMKGLELCGFNSSKPCLLVVGGSLGAGSINSCIRSALKQLTSEFQVIHLCGKGKLDSSLVGVEGYCQFEYANEELADLFAASSVVISRAGANSLYEILALGKPHILIPISSQVSRGDQIQNARYFQGLGISVVIQDELLKADVLLQALQDVMRKKDEIDNKIKALKIESATDKIVAIIKEQAHVQTPRIV.

UDP-N-acetyl-alpha-D-glucosamine is bound by residues 12–14, Arg166, Ser196, and Gln291; that span reads TAG.

This sequence belongs to the glycosyltransferase 28 family. MurG subfamily.

It localises to the cell inner membrane. It carries out the reaction di-trans,octa-cis-undecaprenyl diphospho-N-acetyl-alpha-D-muramoyl-L-alanyl-D-glutamyl-meso-2,6-diaminopimeloyl-D-alanyl-D-alanine + UDP-N-acetyl-alpha-D-glucosamine = di-trans,octa-cis-undecaprenyl diphospho-[N-acetyl-alpha-D-glucosaminyl-(1-&gt;4)]-N-acetyl-alpha-D-muramoyl-L-alanyl-D-glutamyl-meso-2,6-diaminopimeloyl-D-alanyl-D-alanine + UDP + H(+). The protein operates within cell wall biogenesis; peptidoglycan biosynthesis. Its function is as follows. Cell wall formation. Catalyzes the transfer of a GlcNAc subunit on undecaprenyl-pyrophosphoryl-MurNAc-pentapeptide (lipid intermediate I) to form undecaprenyl-pyrophosphoryl-MurNAc-(pentapeptide)GlcNAc (lipid intermediate II). This chain is UDP-N-acetylglucosamine--N-acetylmuramyl-(pentapeptide) pyrophosphoryl-undecaprenol N-acetylglucosamine transferase, found in Legionella pneumophila (strain Lens).